The primary structure comprises 615 residues: Chaperone protein DnaK (615 aa).

Thr177 is modified (phosphothreonine; by autocatalysis). Residues 567–615 are disordered; that stretch reads TKESQGIAMKAYQKAQEKQAQEKGTQENTTAKNEKPQDEVVDADFEEKK. Residues 581-591 show a composition bias toward basic and acidic residues; the sequence is AQEKQAQEKGT. A compositionally biased stretch (acidic residues) spans 605 to 615; sequence EVVDADFEEKK.

This sequence belongs to the heat shock protein 70 family.

Acts as a chaperone. This is Chaperone protein DnaK from Onion yellows phytoplasma (strain OY-M).